The sequence spans 196 residues: Probable malonic semialdehyde reductase RutE (196 aa).

It belongs to the nitroreductase family. HadB/RutE subfamily. Requires FMN as cofactor.

It carries out the reaction 3-hydroxypropanoate + NADP(+) = 3-oxopropanoate + NADPH + H(+). In terms of biological role, may reduce toxic product malonic semialdehyde to 3-hydroxypropionic acid, which is excreted. In Escherichia coli O81 (strain ED1a), this protein is Probable malonic semialdehyde reductase RutE.